The chain runs to 715 residues: Fatty acid oxidation complex subunit alpha (715 aa).

The enoyl-CoA hydratase stretch occupies residues 1-190 (MTTTSAFMLN…KAGLVDDVVP (190 aa)). A 3-hydroxyacyl-CoA dehydrogenase region spans residues 306 to 714 (GPLNSVGILG…FWTNGETDQG (409 aa)).

It in the N-terminal section; belongs to the enoyl-CoA hydratase/isomerase family. In the central section; belongs to the 3-hydroxyacyl-CoA dehydrogenase family. As to quaternary structure, heterotetramer of two alpha chains (FadJ) and two beta chains (FadI).

It localises to the cytoplasm. The enzyme catalyses a (3S)-3-hydroxyacyl-CoA = a (2E)-enoyl-CoA + H2O. The catalysed reaction is a 4-saturated-(3S)-3-hydroxyacyl-CoA = a (3E)-enoyl-CoA + H2O. It catalyses the reaction a (3S)-3-hydroxyacyl-CoA + NAD(+) = a 3-oxoacyl-CoA + NADH + H(+). It carries out the reaction (3S)-3-hydroxybutanoyl-CoA = (3R)-3-hydroxybutanoyl-CoA. It functions in the pathway lipid metabolism; fatty acid beta-oxidation. Functionally, catalyzes the formation of a hydroxyacyl-CoA by addition of water on enoyl-CoA. Also exhibits 3-hydroxyacyl-CoA epimerase and 3-hydroxyacyl-CoA dehydrogenase activities. The protein is Fatty acid oxidation complex subunit alpha of Salmonella choleraesuis (strain SC-B67).